A 305-amino-acid polypeptide reads, in one-letter code: tRNA dimethylallyltransferase (305 aa).

11-18 (GPTAVGKT) provides a ligand contact to ATP. 13–18 (TAVGKT) contributes to the substrate binding site. The tract at residues 36 to 39 (DSMQ) is interaction with substrate tRNA.

This sequence belongs to the IPP transferase family. In terms of assembly, monomer. Requires Mg(2+) as cofactor.

The catalysed reaction is adenosine(37) in tRNA + dimethylallyl diphosphate = N(6)-dimethylallyladenosine(37) in tRNA + diphosphate. Its function is as follows. Catalyzes the transfer of a dimethylallyl group onto the adenine at position 37 in tRNAs that read codons beginning with uridine, leading to the formation of N6-(dimethylallyl)adenosine (i(6)A). This chain is tRNA dimethylallyltransferase, found in Listeria monocytogenes serotype 4a (strain HCC23).